The following is a 253-amino-acid chain: Ubiquinone/menaquinone biosynthesis C-methyltransferase UbiE (253 aa).

Residues threonine 76, aspartate 97, 125 to 126 (NA), and serine 142 each bind S-adenosyl-L-methionine.

It belongs to the class I-like SAM-binding methyltransferase superfamily. MenG/UbiE family.

It catalyses the reaction a 2-demethylmenaquinol + S-adenosyl-L-methionine = a menaquinol + S-adenosyl-L-homocysteine + H(+). It carries out the reaction a 2-methoxy-6-(all-trans-polyprenyl)benzene-1,4-diol + S-adenosyl-L-methionine = a 5-methoxy-2-methyl-3-(all-trans-polyprenyl)benzene-1,4-diol + S-adenosyl-L-homocysteine + H(+). The protein operates within quinol/quinone metabolism; menaquinone biosynthesis; menaquinol from 1,4-dihydroxy-2-naphthoate: step 2/2. It functions in the pathway cofactor biosynthesis; ubiquinone biosynthesis. Functionally, methyltransferase required for the conversion of demethylmenaquinol (DMKH2) to menaquinol (MKH2) and the conversion of 2-polyprenyl-6-methoxy-1,4-benzoquinol (DDMQH2) to 2-polyprenyl-3-methyl-6-methoxy-1,4-benzoquinol (DMQH2). The sequence is that of Ubiquinone/menaquinone biosynthesis C-methyltransferase UbiE from Xylella fastidiosa (strain M12).